Reading from the N-terminus, the 742-residue chain is F-box only protein 30 (742 aa).

A TRAF-type zinc finger spans residues 49–108 (EHRLLCPFERVPCLNSNFGCPFTLARNKVAEHLEMCPASVVCCTMEWNRWPVSYSDRKSY). Residues 214–242 (SLQGTTNEMDEESNRESSQDRNAKDQDHL) form a disordered region. Over residues 225–242 (ESNRESSQDRNAKDQDHL) the composition is skewed to basic and acidic residues. A Phosphoserine modification is found at Ser379. Residues 607 to 653 (SDHLSSLPFEVLQHIAGFLDGFSLCQLACVSRLMRDICGSLLQSRGM) enclose the F-box domain.

As to quaternary structure, part of a SCF (SKP1-cullin-F-box) protein ligase complex. Interacts with SKP1, CUL1 and RBX1/ROC1. In terms of processing, auto-ubiquitinated. May be neddylated. Neddylation may be required for E3 ligase activity.

The protein operates within protein modification; protein ubiquitination. In terms of biological role, substrate-recognition component of the SCF (SKP1-CUL1-F-box protein)-type E3 ubiquitin ligase complex. Required for muscle atrophy following denervation. The sequence is that of F-box only protein 30 (Fbxo30) from Rattus norvegicus (Rat).